We begin with the raw amino-acid sequence, 184 residues long: Acireductone dioxygenase (184 aa).

His87, His89, Glu93, and His137 together coordinate Fe(2+). Ni(2+) is bound by residues His87, His89, Glu93, and His137.

Belongs to the acireductone dioxygenase (ARD) family. Fe(2+) serves as cofactor. It depends on Ni(2+) as a cofactor.

The protein localises to the cytoplasm. Its subcellular location is the nucleus. The catalysed reaction is 1,2-dihydroxy-5-(methylsulfanyl)pent-1-en-3-one + O2 = 4-methylsulfanyl-2-oxobutanoate + formate + 2 H(+). The enzyme catalyses 1,2-dihydroxy-5-(methylsulfanyl)pent-1-en-3-one + O2 = 3-(methylsulfanyl)propanoate + CO + formate + 2 H(+). The protein operates within amino-acid biosynthesis; L-methionine biosynthesis via salvage pathway; L-methionine from S-methyl-5-thio-alpha-D-ribose 1-phosphate: step 5/6. In terms of biological role, catalyzes 2 different reactions between oxygen and the acireductone 1,2-dihydroxy-3-keto-5-methylthiopentene (DHK-MTPene) depending upon the metal bound in the active site. Fe-containing acireductone dioxygenase (Fe-ARD) produces formate and 2-keto-4-methylthiobutyrate (KMTB), the alpha-ketoacid precursor of methionine in the methionine recycle pathway. Ni-containing acireductone dioxygenase (Ni-ARD) produces methylthiopropionate, carbon monoxide and formate, and does not lie on the methionine recycle pathway. The chain is Acireductone dioxygenase from Ciona intestinalis (Transparent sea squirt).